Reading from the N-terminus, the 484-residue chain is tRNA sulfurtransferase (484 aa).

Positions 63 to 167 (ANLILLLSST…NEKLFFIDKK (105 aa)) constitute a THUMP domain. ATP-binding positions include 185–186 (LI), K267, G289, and Q298. A disulfide bridge links C346 with C458. The Rhodanese domain occupies 406–484 (FAENEIVLDI…GFDNVKVYRP (79 aa)). Catalysis depends on C458, which acts as the Cysteine persulfide intermediate.

Belongs to the ThiI family.

It localises to the cytoplasm. It carries out the reaction [ThiI sulfur-carrier protein]-S-sulfanyl-L-cysteine + a uridine in tRNA + 2 reduced [2Fe-2S]-[ferredoxin] + ATP + H(+) = [ThiI sulfur-carrier protein]-L-cysteine + a 4-thiouridine in tRNA + 2 oxidized [2Fe-2S]-[ferredoxin] + AMP + diphosphate. It catalyses the reaction [ThiS sulfur-carrier protein]-C-terminal Gly-Gly-AMP + S-sulfanyl-L-cysteinyl-[cysteine desulfurase] + AH2 = [ThiS sulfur-carrier protein]-C-terminal-Gly-aminoethanethioate + L-cysteinyl-[cysteine desulfurase] + A + AMP + 2 H(+). It participates in cofactor biosynthesis; thiamine diphosphate biosynthesis. In terms of biological role, catalyzes the ATP-dependent transfer of a sulfur to tRNA to produce 4-thiouridine in position 8 of tRNAs, which functions as a near-UV photosensor. Also catalyzes the transfer of sulfur to the sulfur carrier protein ThiS, forming ThiS-thiocarboxylate. This is a step in the synthesis of thiazole, in the thiamine biosynthesis pathway. The sulfur is donated as persulfide by IscS. In Psychromonas ingrahamii (strain DSM 17664 / CCUG 51855 / 37), this protein is tRNA sulfurtransferase.